A 404-amino-acid polypeptide reads, in one-letter code: F-box protein At2g17036 (404 aa).

The F-box domain occupies 2–50 (MDWATLPKDLLDLISKCLESSFDLIQFRSVCSSWRSAAGPKRLLWAHNL).

This chain is F-box protein At2g17036, found in Arabidopsis thaliana (Mouse-ear cress).